A 217-amino-acid polypeptide reads, in one-letter code: 3,4-dihydroxy-2-butanone 4-phosphate synthase (217 aa).

D-ribulose 5-phosphate-binding positions include 37–38 (RE), Asp-42, 150–154 (RRGHT), and Glu-174. Mg(2+) is bound at residue Glu-38. His-153 contacts Mg(2+).

It belongs to the DHBP synthase family. In terms of assembly, homodimer. It depends on Mg(2+) as a cofactor. The cofactor is Mn(2+).

The enzyme catalyses D-ribulose 5-phosphate = (2S)-2-hydroxy-3-oxobutyl phosphate + formate + H(+). It participates in cofactor biosynthesis; riboflavin biosynthesis; 2-hydroxy-3-oxobutyl phosphate from D-ribulose 5-phosphate: step 1/1. Catalyzes the conversion of D-ribulose 5-phosphate to formate and 3,4-dihydroxy-2-butanone 4-phosphate. The chain is 3,4-dihydroxy-2-butanone 4-phosphate synthase from Shewanella oneidensis (strain ATCC 700550 / JCM 31522 / CIP 106686 / LMG 19005 / NCIMB 14063 / MR-1).